The primary structure comprises 203 residues: MQFELNAQARTLQGTGASRRLRHAAKVPGIVYGGAAAPQSIEVDHNDLLLKLKKEAFHSSIINLIIDGKKEQVLLRDTQVHAYKPLVLHVDFQRVDATHELHVKVPLHFVNEEVAPGVKLNGGLVNHVMTEVDIQCLAGDLPEFIEVDLSSLKIGGSIHLSQLKLPKGVKIVHHTADDSVVVGIVGKGGASEEAAEGEAAAAE.

This sequence belongs to the bacterial ribosomal protein bL25 family. CTC subfamily. Part of the 50S ribosomal subunit; part of the 5S rRNA/L5/L18/L25 subcomplex. Contacts the 5S rRNA. Binds to the 5S rRNA independently of L5 and L18.

Functionally, this is one of the proteins that binds to the 5S RNA in the ribosome where it forms part of the central protuberance. The chain is Large ribosomal subunit protein bL25 from Dechloromonas aromatica (strain RCB).